The following is a 470-amino-acid chain: Uronate isomerase (470 aa).

It belongs to the metallo-dependent hydrolases superfamily. Uronate isomerase family.

It carries out the reaction D-glucuronate = D-fructuronate. The catalysed reaction is aldehydo-D-galacturonate = keto-D-tagaturonate. Its pathway is carbohydrate metabolism; pentose and glucuronate interconversion. The sequence is that of Uronate isomerase from Cutibacterium acnes (strain DSM 16379 / KPA171202) (Propionibacterium acnes).